A 239-amino-acid polypeptide reads, in one-letter code: RNA chaperone ProQ (239 aa).

Residues 107-177 are disordered; the sequence is KARVQAQRAE…RKPVAKPVQA (71 aa). A compositionally biased stretch (basic and acidic residues) spans 115–137; sequence AEQRAKKREAENVAAGEKNERPT.

Belongs to the ProQ family.

It localises to the cytoplasm. Functionally, RNA chaperone with significant RNA binding, RNA strand exchange and RNA duplexing activities. May regulate ProP activity through an RNA-based, post-transcriptional mechanism. This is RNA chaperone ProQ from Photorhabdus laumondii subsp. laumondii (strain DSM 15139 / CIP 105565 / TT01) (Photorhabdus luminescens subsp. laumondii).